Here is a 224-residue protein sequence, read N- to C-terminus: Holliday junction branch migration complex subunit RuvA (224 aa).

The interval 1 to 64 (MIGKVAGILD…EDLLQLFGFP (64 aa)) is domain I. The interval 65–143 (TMIEKEWHRL…ALMAMGGGTA (79 aa)) is domain II. The disordered stretch occupies residues 141–185 (GTAALAPSEPPEPEPGTSSGSRRKTRAPEPPRPSHTADALSALAN). The interval 144-170 (ALAPSEPPEPEPGTSSGSRRKTRAPEP) is flexible linker. The tract at residues 171-224 (PRPSHTADALSALANLGYQPTDAAQAVAQAAGESPDADTAALIRAALKLLAPKS) is domain III.

Belongs to the RuvA family. Homotetramer. Forms an RuvA(8)-RuvB(12)-Holliday junction (HJ) complex. HJ DNA is sandwiched between 2 RuvA tetramers; dsDNA enters through RuvA and exits via RuvB. An RuvB hexamer assembles on each DNA strand where it exits the tetramer. Each RuvB hexamer is contacted by two RuvA subunits (via domain III) on 2 adjacent RuvB subunits; this complex drives branch migration. In the full resolvosome a probable DNA-RuvA(4)-RuvB(12)-RuvC(2) complex forms which resolves the HJ.

The protein resides in the cytoplasm. The RuvA-RuvB-RuvC complex processes Holliday junction (HJ) DNA during genetic recombination and DNA repair, while the RuvA-RuvB complex plays an important role in the rescue of blocked DNA replication forks via replication fork reversal (RFR). RuvA specifically binds to HJ cruciform DNA, conferring on it an open structure. The RuvB hexamer acts as an ATP-dependent pump, pulling dsDNA into and through the RuvAB complex. HJ branch migration allows RuvC to scan DNA until it finds its consensus sequence, where it cleaves and resolves the cruciform DNA. This is Holliday junction branch migration complex subunit RuvA from Cereibacter sphaeroides (strain ATCC 17029 / ATH 2.4.9) (Rhodobacter sphaeroides).